A 333-amino-acid polypeptide reads, in one-letter code: Glyceraldehyde-3-phosphate dehydrogenase 1 (333 aa).

Residues 12–13, aspartate 35, and arginine 79 contribute to the NAD(+) site; that span reads RI. D-glyceraldehyde 3-phosphate-binding positions include 152–154, threonine 183, arginine 198, 211–212, and arginine 234; these read SCT and SG. Cysteine 153 acts as the Nucleophile in catalysis. Asparagine 314 is a binding site for NAD(+).

Belongs to the glyceraldehyde-3-phosphate dehydrogenase family. In terms of assembly, homotetramer.

It is found in the cytoplasm. The enzyme catalyses D-glyceraldehyde 3-phosphate + phosphate + NAD(+) = (2R)-3-phospho-glyceroyl phosphate + NADH + H(+). Its pathway is carbohydrate degradation; glycolysis; pyruvate from D-glyceraldehyde 3-phosphate: step 1/5. With respect to regulation, resistant to pentalenolactone (PL). In terms of biological role, catalyzes the oxidative phosphorylation of glyceraldehyde 3-phosphate (G3P) to 1,3-bisphosphoglycerate (BPG) using the cofactor NAD. The first reaction step involves the formation of a hemiacetal intermediate between G3P and a cysteine residue, and this hemiacetal intermediate is then oxidized to a thioester, with concomitant reduction of NAD to NADH. The reduced NADH is then exchanged with the second NAD, and the thioester is attacked by a nucleophilic inorganic phosphate to produce BPG. In Streptomyces arenae, this protein is Glyceraldehyde-3-phosphate dehydrogenase 1 (gap1).